Consider the following 383-residue polypeptide: Acetylornithine deacetylase (383 aa).

H80 contacts Zn(2+). D82 is a catalytic residue. D112 lines the Zn(2+) pocket. The active site involves E144. Zn(2+) contacts are provided by E145, E169, and H355.

This sequence belongs to the peptidase M20A family. ArgE subfamily. As to quaternary structure, homodimer. Zn(2+) is required as a cofactor. Co(2+) serves as cofactor. It depends on glutathione as a cofactor.

It is found in the cytoplasm. It carries out the reaction N(2)-acetyl-L-ornithine + H2O = L-ornithine + acetate. Its pathway is amino-acid biosynthesis; L-arginine biosynthesis; L-ornithine from N(2)-acetyl-L-ornithine (linear): step 1/1. Its function is as follows. Catalyzes the hydrolysis of the amide bond of N(2)-acetylated L-amino acids. Cleaves the acetyl group from N-acetyl-L-ornithine to form L-ornithine, an intermediate in L-arginine biosynthesis pathway, and a branchpoint in the synthesis of polyamines. This is Acetylornithine deacetylase from Escherichia coli O45:K1 (strain S88 / ExPEC).